The chain runs to 95 residues: Antitoxin VapB41 (95 aa).

Its function is as follows. Antitoxin component of a type II toxin-antitoxin (TA) system. The sequence is that of Antitoxin VapB41 (vapB41) from Mycobacterium tuberculosis (strain CDC 1551 / Oshkosh).